The sequence spans 139 residues: Putative pre-16S rRNA nuclease (139 aa).

The protein belongs to the YqgF nuclease family.

The protein resides in the cytoplasm. Its function is as follows. Could be a nuclease involved in processing of the 5'-end of pre-16S rRNA. The sequence is that of Putative pre-16S rRNA nuclease from Haemophilus influenzae (strain PittEE).